A 518-amino-acid chain; its full sequence is Laccase (518 aa).

The first 21 residues, 1-21 (MSRFQSLLSFVLVSLAAVANA), serve as a signal peptide directing secretion. Plastocyanin-like domains follow at residues 23–148 (IGPV…FVVY) and 160–302 (IDND…ILRY). N-linked (GlcNAc...) asparagine glycans are attached at residues Asn-72 and Asn-75. Cu cation is bound by residues His-85, His-87, His-130, and His-132. 2 disulfides stabilise this stretch: Cys-106/Cys-507 and Cys-138/Cys-226. An N-linked (GlcNAc...) asparagine glycan is attached at Asn-229. The interval 308–330 (VEPTTTQTTSTKPLNEADLHPLT) is disordered. Residues Asn-354, Asn-362, and Asn-398 are each glycosylated (N-linked (GlcNAc...) asparagine). Positions 369–489 (SVPVLLQILS…AGFAVVLAED (121 aa)) constitute a Plastocyanin-like 3 domain. Residues His-416, His-419, His-421, His-471, Cys-472, His-473, and His-477 each contribute to the Cu cation site.

It belongs to the multicopper oxidase family. Requires Cu cation as cofactor.

The protein resides in the secreted. It carries out the reaction 4 hydroquinone + O2 = 4 benzosemiquinone + 2 H2O. Lignin degradation and detoxification of lignin-derived products. Cleaves the C-C and C-O bonds of some phenolic lignin model compounds (such as O- and P-quinols, aminophenols and phenylenediamine). May also be involved in synthesis of phenoxazinone pigments. This chain is Laccase (LCC3-1), found in Pycnoporus cinnabarinus (Cinnabar-red polypore).